The following is a 147-amino-acid chain: UPF0260 protein CJA_2436 (147 aa).

This sequence belongs to the UPF0260 family.

The sequence is that of UPF0260 protein CJA_2436 from Cellvibrio japonicus (strain Ueda107) (Pseudomonas fluorescens subsp. cellulosa).